The primary structure comprises 96 residues: Putative membrane protein insertion efficiency factor (96 aa).

A compositionally biased stretch (low complexity) spans 71 to 84 (THGTAAAPPASAAP). Residues 71–96 (THGTAAAPPASAAPGRPPVTVRLPRP) form a disordered region.

It belongs to the UPF0161 family.

The protein resides in the cell inner membrane. In terms of biological role, could be involved in insertion of integral membrane proteins into the membrane. The polypeptide is Putative membrane protein insertion efficiency factor (Cupriavidus metallidurans (strain ATCC 43123 / DSM 2839 / NBRC 102507 / CH34) (Ralstonia metallidurans)).